The following is a 315-amino-acid chain: Glutaminase (315 aa).

Substrate contacts are provided by Ser70, Asn120, Glu166, Asn173, Tyr197, Tyr249, and Val267.

The protein belongs to the glutaminase family. In terms of assembly, homotetramer.

It catalyses the reaction L-glutamine + H2O = L-glutamate + NH4(+). In Sinorhizobium fredii (strain NBRC 101917 / NGR234), this protein is Glutaminase.